Reading from the N-terminus, the 360-residue chain is Glycoprotein-N-acetylgalactosamine 3-beta-galactosyltransferase 1 (360 aa).

Residues methionine 1 to lysine 7 lie on the Cytoplasmic side of the membrane. Residues valine 8 to alanine 28 form a helical; Signal-anchor for type II membrane protein membrane-spanning segment. The Lumenal segment spans residues arginine 29–serine 360. A disulfide bridge links cysteine 79 with cysteine 103. 5 residues coordinate UDP: methionine 82, glutamate 126, glycine 127, arginine 128, and lysine 134. Asparagine 148 is a glycosylation site (N-linked (GlcNAc...) asparagine). Aspartate 157 contacts UDP. Residues aspartate 157 and aspartate 159 each contribute to the Mn(2+) site. Residue asparagine 173 is glycosylated (N-linked (GlcNAc...) asparagine). Cysteines 220 and 234 form a disulfide. Tryptophan 274 serves as a coordination point for a glycoprotein. Cysteine 289 and cysteine 290 form a disulfide bridge. Histidine 298 and tyrosine 299 together coordinate UDP. A Mn(2+)-binding site is contributed by histidine 298. Asparagine 341 and asparagine 347 each carry an N-linked (GlcNAc...) asparagine glycan.

Belongs to the glycosyltransferase 31 family. Beta3-Gal-T subfamily. In terms of assembly, homodimer; disulfide-linked. Mn(2+) is required as a cofactor.

The protein resides in the membrane. It catalyses the reaction an N-acetyl-alpha-D-galactosaminyl derivative + UDP-alpha-D-galactose = a beta-D-galactosyl-(1-&gt;3)-N-acetyl-alpha-D-galactosaminyl derivative + UDP + H(+). Its pathway is protein modification; protein glycosylation. In terms of biological role, glycosyltransferase that generates the core 1 O-glycan Gal-beta1-3GalNAc-alpha1-Ser/Thr (T antigen), which is a precursor for many extended O-glycans in glycoproteins. The chain is Glycoprotein-N-acetylgalactosamine 3-beta-galactosyltransferase 1 (c1galt1) from Xenopus laevis (African clawed frog).